We begin with the raw amino-acid sequence, 874 residues long: Valine--tRNA ligase (874 aa).

Positions 42–52 match the 'HIGH' region motif; it reads PNITGRIHIGH. A 'KMSKS' region motif is present at residues 522 to 526; the sequence is KMSKS. ATP is bound at residue Lys525. Positions 806–874 form a coiled coil; that stretch reads DYIDIDTEKQ…KLQALLKEIS (69 aa).

Belongs to the class-I aminoacyl-tRNA synthetase family. ValS type 1 subfamily. Monomer.

It localises to the cytoplasm. It catalyses the reaction tRNA(Val) + L-valine + ATP = L-valyl-tRNA(Val) + AMP + diphosphate. Catalyzes the attachment of valine to tRNA(Val). As ValRS can inadvertently accommodate and process structurally similar amino acids such as threonine, to avoid such errors, it has a 'posttransfer' editing activity that hydrolyzes mischarged Thr-tRNA(Val) in a tRNA-dependent manner. In Petrotoga mobilis (strain DSM 10674 / SJ95), this protein is Valine--tRNA ligase.